The following is a 270-amino-acid chain: MMLRLLSSLLLVAVASGYGPPSSRPSSRVVNGEDAVPYSWPWQVSLQYEKSGSFYHTCGGSLIAPDWVVTAGHCISSSRTYQVVLGEYDRAVKEGPEQVIPINSGDLFVHPLWNRSCVACGNDIALIKLSRSAQLGDAVQLASLPPAGDILPNETPCYITGWGRLYTNGPLPDKLQEALLPVVDYEHCSRWNWWGSSVKKTMVCAGGDIRSGCNGDSGGPLNCPTEDGGWQVHGVTSFVSAFGCNTRRKPTVFTRVSAFIDWIEETIASH.

Residues 1-15 (MMLRLLSSLLLVAVA) constitute a signal peptide (or 16). A propeptide spans 16–28 (SGYGPPSSRPSSR) (activation peptide). Residues 29–268 (VVNGEDAVPY…FIDWIEETIA (240 aa)) form the Peptidase S1 domain. Cysteines 58 and 74 form a disulfide. Residue His73 is the Charge relay system of the active site. N-linked (GlcNAc...) asparagine glycosylation occurs at Asn114. A disulfide bridge links Cys117 with Cys120. The active-site Charge relay system is Asp123. 3 cysteine pairs are disulfide-bonded: Cys157–Cys223, Cys188–Cys204, and Cys213–Cys244. Residue Ser217 is the Charge relay system of the active site.

It belongs to the peptidase S1 family. Elastase subfamily. In terms of tissue distribution, pancreas. Not detectable in keratinocytes.

The enzyme catalyses Preferential cleavage: Ala-|-Xaa. Does not hydrolyze elastin.. In terms of biological role, efficient protease with alanine specificity but only little elastolytic activity. The protein is Chymotrypsin-like elastase family member 3B (CELA3B) of Homo sapiens (Human).